Here is a 369-residue protein sequence, read N- to C-terminus: NAD(P)H-quinone oxidoreductase subunit 1, chloroplastic (369 aa).

Helical transmembrane passes span 25-45, 104-124, 130-150, 270-290, and 306-326; these read FGFI…TIGI, VMVV…HGII, IGVF…LTAG, LSAT…LFLP, and VISI…FLFI.

It belongs to the complex I subunit 1 family. In terms of assembly, NDH is composed of at least 16 different subunits, 5 of which are encoded in the nucleus.

Its subcellular location is the plastid. The protein resides in the chloroplast thylakoid membrane. The catalysed reaction is a plastoquinone + NADH + (n+1) H(+)(in) = a plastoquinol + NAD(+) + n H(+)(out). It catalyses the reaction a plastoquinone + NADPH + (n+1) H(+)(in) = a plastoquinol + NADP(+) + n H(+)(out). NDH shuttles electrons from NAD(P)H:plastoquinone, via FMN and iron-sulfur (Fe-S) centers, to quinones in the photosynthetic chain and possibly in a chloroplast respiratory chain. The immediate electron acceptor for the enzyme in this species is believed to be plastoquinone. Couples the redox reaction to proton translocation, and thus conserves the redox energy in a proton gradient. This chain is NAD(P)H-quinone oxidoreductase subunit 1, chloroplastic, found in Huperzia lucidula (Shining clubmoss).